Here is a 134-residue protein sequence, read N- to C-terminus: D-ribose pyranase (134 aa).

Residue His-20 is the Proton donor of the active site. Residues Asp-28, His-99, and 123-125 each bind substrate; that span reads YSN.

It belongs to the RbsD / FucU family. RbsD subfamily. As to quaternary structure, homodecamer.

The protein localises to the cytoplasm. The enzyme catalyses beta-D-ribopyranose = beta-D-ribofuranose. It participates in carbohydrate metabolism; D-ribose degradation; D-ribose 5-phosphate from beta-D-ribopyranose: step 1/2. Its function is as follows. Catalyzes the interconversion of beta-pyran and beta-furan forms of D-ribose. The polypeptide is D-ribose pyranase (Staphylococcus aureus (strain USA300)).